The sequence spans 360 residues: MLVWLAEYLVKFYSGFNVFSYLTFRAIVSLLTALFISLWMGPHLIAWLQKLQIGQVVRNDGPESHFSKRGTPTMGGLMILFSITISVLMWAYPSNPYVWCVLFILIGYGIVGFIDDYRKVVRKNTKGLIARWKYFWQSIIALAAAFTMYSIGKDTSATELVVPFFKDIMPQLGLLYVLLAYFVIVGTSNAVNLTDGLDGLAIMPTVFVAAGFALVAWATGNVNFAAYLHIPYLRHAGELVIVCTAIVGAGLGFLWFNTYPAQVFMGDVGSLALGGALGTIAVLLRQEFLLVIMGGVFVVETLSVILQVGSFKLRGQRIFRMAPIHHHYELKGWPEPRVIVRFWIISLMLVLIGLATLKVR.

10 consecutive transmembrane segments (helical) span residues 27 to 47, 72 to 92, 94 to 114, 132 to 152, 168 to 188, 199 to 219, 236 to 256, 263 to 283, 288 to 308, and 338 to 358; these read IVSLLTALFISLWMGPHLIAW, PTMGGLMILFSITISVLMWAY, SNPYVWCVLFILIGYGIVGFI, WKYFWQSIIALAAAFTMYSIG, IMPQLGLLYVLLAYFVIVGTS, GLAIMPTVFVAAGFALVAWAT, AGELVIVCTAIVGAGLGFLWF, VFMGDVGSLALGGALGTIAVL, FLLVIMGGVFVVETLSVILQV, and VIVRFWIISLMLVLIGLATLK.

The protein belongs to the glycosyltransferase 4 family. MraY subfamily. Mg(2+) serves as cofactor.

The protein localises to the cell inner membrane. The enzyme catalyses UDP-N-acetyl-alpha-D-muramoyl-L-alanyl-gamma-D-glutamyl-meso-2,6-diaminopimeloyl-D-alanyl-D-alanine + di-trans,octa-cis-undecaprenyl phosphate = di-trans,octa-cis-undecaprenyl diphospho-N-acetyl-alpha-D-muramoyl-L-alanyl-D-glutamyl-meso-2,6-diaminopimeloyl-D-alanyl-D-alanine + UMP. Its pathway is cell wall biogenesis; peptidoglycan biosynthesis. Its function is as follows. Catalyzes the initial step of the lipid cycle reactions in the biosynthesis of the cell wall peptidoglycan: transfers peptidoglycan precursor phospho-MurNAc-pentapeptide from UDP-MurNAc-pentapeptide onto the lipid carrier undecaprenyl phosphate, yielding undecaprenyl-pyrophosphoryl-MurNAc-pentapeptide, known as lipid I. The chain is Phospho-N-acetylmuramoyl-pentapeptide-transferase from Yersinia pseudotuberculosis serotype O:1b (strain IP 31758).